A 335-amino-acid chain; its full sequence is Phenylalanine--tRNA ligase alpha subunit (335 aa).

A Mg(2+)-binding site is contributed by Glu-262.

It belongs to the class-II aminoacyl-tRNA synthetase family. Phe-tRNA synthetase alpha subunit type 1 subfamily. Tetramer of two alpha and two beta subunits. Mg(2+) is required as a cofactor.

It is found in the cytoplasm. The catalysed reaction is tRNA(Phe) + L-phenylalanine + ATP = L-phenylalanyl-tRNA(Phe) + AMP + diphosphate + H(+). This Prochlorococcus marinus (strain NATL2A) protein is Phenylalanine--tRNA ligase alpha subunit.